The primary structure comprises 161 residues: 6,7-dimethyl-8-ribityllumazine synthase (161 aa).

Residues tryptophan 31, serine 63–glutamate 65, and valine 85–isoleucine 87 contribute to the 5-amino-6-(D-ribitylamino)uracil site. Glycine 90–threonine 91 serves as a coordination point for (2S)-2-hydroxy-3-oxobutyl phosphate. Residue histidine 93 is the Proton donor of the active site. Residue phenylalanine 118 participates in 5-amino-6-(D-ribitylamino)uracil binding. Position 132 (arginine 132) interacts with (2S)-2-hydroxy-3-oxobutyl phosphate.

The protein belongs to the DMRL synthase family.

The enzyme catalyses (2S)-2-hydroxy-3-oxobutyl phosphate + 5-amino-6-(D-ribitylamino)uracil = 6,7-dimethyl-8-(1-D-ribityl)lumazine + phosphate + 2 H2O + H(+). It functions in the pathway cofactor biosynthesis; riboflavin biosynthesis; riboflavin from 2-hydroxy-3-oxobutyl phosphate and 5-amino-6-(D-ribitylamino)uracil: step 1/2. Functionally, catalyzes the formation of 6,7-dimethyl-8-ribityllumazine by condensation of 5-amino-6-(D-ribitylamino)uracil with 3,4-dihydroxy-2-butanone 4-phosphate. This is the penultimate step in the biosynthesis of riboflavin. The chain is 6,7-dimethyl-8-ribityllumazine synthase from Arthrobacter sp. (strain FB24).